Consider the following 365-residue polypeptide: H-2 class I histocompatibility antigen, D-D alpha chain (365 aa).

Residues 1–24 (MGAMAPRTLLLLLAAALGPTQTRA) form the signal peptide. Residues 25–114 (GSHSLRYFVT…ALRYYNQSAG (90 aa)) form an alpha-1 region. The Extracellular segment spans residues 25–311 (GSHSLRYFVT…EPPSSTKTNT (287 aa)). Asn110 carries an N-linked (GlcNAc...) asparagine glycan. The segment at 115–206 (GSHTLQWMAG…KNGNATLLRT (92 aa)) is alpha-2. A disulfide bond links Cys125 and Cys188. N-linked (GlcNAc...) asparagine glycosylation is present at Asn200. The alpha-3 stretch occupies residues 207-298 (DPPKAHVTHH…GLPEPLTLRW (92 aa)). The Ig-like C1-type domain maps to 209–297 (PKAHVTHHRR…EGLPEPLTLR (89 aa)). Cys227 and Cys283 form a disulfide bridge. Positions 299-311 (GKEEPPSSTKTNT) are connecting peptide. The helical transmembrane segment at 312–334 (VIIAVPVVLGAVVILGAVMAFVM) threads the bilayer. Over 335–365 (KRRRNTGGKGGDYALAPGSQSSDMSLPDCKV) the chain is Cytoplasmic. The disordered stretch occupies residues 343 to 365 (KGGDYALAPGSQSSDMSLPDCKV). 2 positions are modified to phosphoserine: Ser356 and Ser359.

The protein belongs to the MHC class I family. In terms of assembly, heterodimer of an alpha chain and a beta chain (beta-2-microglobulin).

It is found in the membrane. Involved in the presentation of foreign antigens to the immune system. The chain is H-2 class I histocompatibility antigen, D-D alpha chain (H2-D1) from Mus musculus (Mouse).